We begin with the raw amino-acid sequence, 64 residues long: Myotoxin-2 (64 aa).

Positions 1-21 are cleaved as a signal peptide; that stretch reads KILYLLFAFLFLAFLSEPGNA. A disulfide bridge links C32 with C51.

This sequence belongs to the crotamine-myotoxin family. Monomer. As to expression, expressed by the venom gland.

The protein localises to the secreted. Its function is as follows. Cationic peptide that possesses multiple functions. It acts as a cell-penetrating peptide (CPP), and as a potent voltage-gated potassium channel (Kv) inhibitor. It exhibits antimicrobial activities, hind limb paralysis, and severe muscle necrosis by a non-enzymatic mechanism. The protein is Myotoxin-2 of Crotalus durissus terrificus (South American rattlesnake).